A 371-amino-acid chain; its full sequence is Deoxyguanosinetriphosphate triphosphohydrolase-like protein (371 aa).

The HD domain occupies 62–200 (RITHSIEVAQ…SAISDDIAYN (139 aa)).

It belongs to the dGTPase family. Type 2 subfamily.

In Pelagibacter ubique (strain HTCC1062), this protein is Deoxyguanosinetriphosphate triphosphohydrolase-like protein.